The primary structure comprises 152 residues: Xanthine-guanine phosphoribosyltransferase (152 aa).

5-phospho-alpha-D-ribose 1-diphosphate is bound by residues 37–38, arginine 69, and 88–96; these read RG and DDLVDTGGT. Residue arginine 69 coordinates GMP. Residue aspartate 89 coordinates Mg(2+). 2 residues coordinate guanine: aspartate 92 and isoleucine 135. Xanthine-binding residues include aspartate 92 and isoleucine 135. Residues 92-96 and 134-135 each bind GMP; these read DTGGT and WI.

Belongs to the purine/pyrimidine phosphoribosyltransferase family. XGPT subfamily. Homotetramer. It depends on Mg(2+) as a cofactor.

It localises to the cell inner membrane. It carries out the reaction GMP + diphosphate = guanine + 5-phospho-alpha-D-ribose 1-diphosphate. The enzyme catalyses XMP + diphosphate = xanthine + 5-phospho-alpha-D-ribose 1-diphosphate. It catalyses the reaction IMP + diphosphate = hypoxanthine + 5-phospho-alpha-D-ribose 1-diphosphate. It participates in purine metabolism; GMP biosynthesis via salvage pathway; GMP from guanine: step 1/1. Its pathway is purine metabolism; XMP biosynthesis via salvage pathway; XMP from xanthine: step 1/1. Purine salvage pathway enzyme that catalyzes the transfer of the ribosyl-5-phosphate group from 5-phospho-alpha-D-ribose 1-diphosphate (PRPP) to the N9 position of the 6-oxopurines guanine and xanthine to form the corresponding ribonucleotides GMP (guanosine 5'-monophosphate) and XMP (xanthosine 5'-monophosphate), with the release of PPi. To a lesser extent, also acts on hypoxanthine. The chain is Xanthine-guanine phosphoribosyltransferase from Yersinia pseudotuberculosis serotype O:1b (strain IP 31758).